The following is a 494-amino-acid chain: Splicing regulatory glutamine/lysine-rich protein 1 (494 aa).

The 77-residue stretch at 69–145 folds into the RRM domain; that stretch reads RTVYVGNLNS…RPLKINHSNN (77 aa). 2 positions are modified to phosphoserine: Ser-174 and Ser-187. A disordered region spans residues 176-494; the sequence is ISAAIEPESG…ESPCSKADAV (319 aa). Basic and acidic residues predominate over residues 183–192; it reads ESGKSNERKG. Residues 193 to 262 are compositionally biased toward basic residues; it reads GRSRSHTRSK…KSRSRSRSRD (70 aa). The span at 263–340 shows a compositional bias: basic and acidic residues; that stretch reads KRKDTREKVK…DRSKETDEKR (78 aa). Thr-348 is modified (phosphothreonine). Over residues 357-373 the composition is skewed to basic residues; sequence RRSRSTSRERRRRRSRS. Residues 404-474 are compositionally biased toward basic and acidic residues; that stretch reads REKERDHISD…SPRTEDEGKV (71 aa). The segment covering 476–486 has biased composition (polar residues); sequence HNGNCQPNEES. Residue Lys-490 forms a Glycyl lysine isopeptide (Lys-Gly) (interchain with G-Cter in SUMO2) linkage.

It belongs to the splicing factor SR family. Homodimer. Binds SFRS1, SFRS2, SFRS3 and SFRS6. Interacts with the spliceosome. Interacts with SREK1IP1.

It is found in the nucleus. Participates in the regulation of alternative splicing by modulating the activity of other splice facors. Inhibits the splicing activity of SFRS1, SFRS2 and SFRS6. Augments the splicing activity of SFRS3. The sequence is that of Splicing regulatory glutamine/lysine-rich protein 1 (Srek1) from Mus musculus (Mouse).